The sequence spans 603 residues: Beta-glucuronidase (603 aa).

2 residues coordinate D-glucuronate: aspartate 163 and asparagine 412. The active-site Proton donor is glutamate 413. Residues asparagine 466, tyrosine 472, glutamate 504, tryptophan 549, and lysine 568 each coordinate D-glucuronate. Glutamate 504 (nucleophile) is an active-site residue. The N-K motif signature appears at 566–568; sequence NKK.

The protein belongs to the glycosyl hydrolase 2 family. As to quaternary structure, homotetramer.

It catalyses the reaction a beta-D-glucuronoside + H2O = D-glucuronate + an alcohol. It carries out the reaction 4-methylumbelliferone beta-D-glucuronate + H2O = 4-methylumbelliferone + D-glucuronate. Potently inhibited by a set of synthetic compounds like thio-urea derivatives and analogs, and uronic isofagomine (UIFG) derivatives. Inhibitors of gut microbial beta-glucuronidases block the reactivation of glucuronidated cancer drugs, and thereby alleviate drug-induced GI toxicity. Functionally, displays beta-glucuronidase activity with the artificial substrate p-nitrophenyl-beta-D-glucuronide (PNPG) and with 4-methylumbelliferyl-glucuronide. Is likely capable of scavenging glucuronate from a range of chemically distinct xenobiotic and endobiotic glucuronides present in the gastrointestinal (GI) tract, to be able to utilize these diverse sources of carbon. As part of the GI microbiome, this enzyme is able to reactivate glucuronide drug conjugates, such reactivated compounds can significantly damage the GI tract. The polypeptide is Beta-glucuronidase (uidA) (Escherichia coli (strain K12)).